Consider the following 500-residue polypeptide: Anthranilate synthase component 1 (500 aa).

L-tryptophan contacts are provided by residues serine 49 and 276–278 (PFM). Residue 311–312 (GT) coordinates chorismate. Glutamate 338 lines the Mg(2+) pocket. Chorismate is bound by residues tyrosine 426, arginine 446, 460–462 (GGG), and glycine 462. Position 475 (glutamate 475) interacts with Mg(2+).

Belongs to the anthranilate synthase component I family. As to quaternary structure, heterotetramer consisting of two non-identical subunits: a beta subunit (TrpG) and a large alpha subunit (TrpE). It depends on Mg(2+) as a cofactor.

The catalysed reaction is chorismate + L-glutamine = anthranilate + pyruvate + L-glutamate + H(+). It participates in amino-acid biosynthesis; L-tryptophan biosynthesis; L-tryptophan from chorismate: step 1/5. Its activity is regulated as follows. Feedback inhibited by tryptophan. In terms of biological role, part of a heterotetrameric complex that catalyzes the two-step biosynthesis of anthranilate, an intermediate in the biosynthesis of L-tryptophan. In the first step, the glutamine-binding beta subunit (TrpG) of anthranilate synthase (AS) provides the glutamine amidotransferase activity which generates ammonia as a substrate that, along with chorismate, is used in the second step, catalyzed by the large alpha subunit of AS (TrpE) to produce anthranilate. In the absence of TrpG, TrpE can synthesize anthranilate directly from chorismate and high concentrations of ammonia. The sequence is that of Anthranilate synthase component 1 (trpE) from Cereibacter sphaeroides (strain ATCC 17023 / DSM 158 / JCM 6121 / CCUG 31486 / LMG 2827 / NBRC 12203 / NCIMB 8253 / ATH 2.4.1.) (Rhodobacter sphaeroides).